The chain runs to 127 residues: Small ribosomal subunit protein uS13 (127 aa).

Residues 90–127 are disordered; that stretch reads RRHRQGLPVRGQRTRTNARTRRGRRVTVAGKKKAPSKK. Over residues 101–127 the composition is skewed to basic residues; sequence QRTRTNARTRRGRRVTVAGKKKAPSKK.

This sequence belongs to the universal ribosomal protein uS13 family. In terms of assembly, part of the 30S ribosomal subunit. Forms a loose heterodimer with protein S19. Forms two bridges to the 50S subunit in the 70S ribosome.

Its function is as follows. Located at the top of the head of the 30S subunit, it contacts several helices of the 16S rRNA. In the 70S ribosome it contacts the 23S rRNA (bridge B1a) and protein L5 of the 50S subunit (bridge B1b), connecting the 2 subunits; these bridges are implicated in subunit movement. Contacts the tRNAs in the A and P-sites. The polypeptide is Small ribosomal subunit protein uS13 (Rippkaea orientalis (strain PCC 8801 / RF-1) (Cyanothece sp. (strain PCC 8801))).